We begin with the raw amino-acid sequence, 68 residues long: DNA-directed RNA polymerase subunit Rpo10 (68 aa).

Zn(2+)-binding residues include Cys7, Cys10, Cys44, and Cys45.

The protein belongs to the archaeal Rpo10/eukaryotic RPB10 RNA polymerase subunit family. In terms of assembly, part of the RNA polymerase complex. Requires Zn(2+) as cofactor.

Its subcellular location is the cytoplasm. It catalyses the reaction RNA(n) + a ribonucleoside 5'-triphosphate = RNA(n+1) + diphosphate. DNA-dependent RNA polymerase (RNAP) catalyzes the transcription of DNA into RNA using the four ribonucleoside triphosphates as substrates. The chain is DNA-directed RNA polymerase subunit Rpo10 from Methanococcus maripaludis (strain DSM 14266 / JCM 13030 / NBRC 101832 / S2 / LL).